The following is a 120-amino-acid chain: Large ribosomal subunit protein bL12 (120 aa).

Belongs to the bacterial ribosomal protein bL12 family. Homodimer. Part of the ribosomal stalk of the 50S ribosomal subunit. Forms a multimeric L10(L12)X complex, where L10 forms an elongated spine to which 2 to 4 L12 dimers bind in a sequential fashion. Binds GTP-bound translation factors.

Its function is as follows. Forms part of the ribosomal stalk which helps the ribosome interact with GTP-bound translation factors. Is thus essential for accurate translation. The chain is Large ribosomal subunit protein bL12 from Lactobacillus gasseri (strain ATCC 33323 / DSM 20243 / BCRC 14619 / CIP 102991 / JCM 1131 / KCTC 3163 / NCIMB 11718 / NCTC 13722 / AM63).